Consider the following 116-residue polypeptide: U16-barytoxin-Tl1a (116 aa).

The signal sequence occupies residues 1–20 (MKTIIVFLSLLVLATKFGDA). A propeptide spanning residues 21–74 (KEGVNQEQKKEVTQNEFRVEYLNEMAAMSLLQQLEAIESALFEKEAGRNSRQKR) is cleaved from the precursor. 3 cysteine pairs are disulfide-bonded: Cys-75-Cys-90, Cys-82-Cys-95, and Cys-89-Cys-110.

Belongs to the neurotoxin 14 (magi-1) family. 06 (ICK-Trit) subfamily. As to expression, expressed by the venom gland.

The protein localises to the secreted. Ion channel inhibitor. This chain is U16-barytoxin-Tl1a, found in Trittame loki (Brush-footed trapdoor spider).